Consider the following 378-residue polypeptide: Probable tRNA sulfurtransferase (378 aa).

The 103-residue stretch at 51–153 (DANLEKLQYV…SDKTYLFSKT (103 aa)) folds into the THUMP domain. ATP is bound by residues 171–172 (LM), 196–197 (SF), Arg253, Gly275, and Gln284.

This sequence belongs to the ThiI family.

The protein localises to the cytoplasm. The catalysed reaction is [ThiI sulfur-carrier protein]-S-sulfanyl-L-cysteine + a uridine in tRNA + 2 reduced [2Fe-2S]-[ferredoxin] + ATP + H(+) = [ThiI sulfur-carrier protein]-L-cysteine + a 4-thiouridine in tRNA + 2 oxidized [2Fe-2S]-[ferredoxin] + AMP + diphosphate. It catalyses the reaction [ThiS sulfur-carrier protein]-C-terminal Gly-Gly-AMP + S-sulfanyl-L-cysteinyl-[cysteine desulfurase] + AH2 = [ThiS sulfur-carrier protein]-C-terminal-Gly-aminoethanethioate + L-cysteinyl-[cysteine desulfurase] + A + AMP + 2 H(+). The protein operates within cofactor biosynthesis; thiamine diphosphate biosynthesis. In terms of biological role, catalyzes the ATP-dependent transfer of a sulfur to tRNA to produce 4-thiouridine in position 8 of tRNAs, which functions as a near-UV photosensor. Also catalyzes the transfer of sulfur to the sulfur carrier protein ThiS, forming ThiS-thiocarboxylate. This is a step in the synthesis of thiazole, in the thiamine biosynthesis pathway. The sulfur is donated as persulfide by IscS. This is Probable tRNA sulfurtransferase from Mycoplasmopsis agalactiae (strain NCTC 10123 / CIP 59.7 / PG2) (Mycoplasma agalactiae).